The sequence spans 437 residues: GTPase Der (437 aa).

EngA-type G domains follow at residues 2–167 (ATVL…EKKG) and 180–356 (IRVA…NSLF). Residues 8–15 (GKSNVGKS), 55–59 (DTCGI), 118–121 (NKSE), 186–193 (GRPNAGKS), 233–237 (DTAGL), and 299–302 (NKID) contribute to the GTP site. One can recognise a KH-like domain in the interval 357-437 (YRVQTSAVNA…PIFLKFKNRH (81 aa)).

Belongs to the TRAFAC class TrmE-Era-EngA-EngB-Septin-like GTPase superfamily. EngA (Der) GTPase family. In terms of assembly, associates with the 50S ribosomal subunit.

In terms of biological role, GTPase that plays an essential role in the late steps of ribosome biogenesis. The sequence is that of GTPase Der from Thermosipho melanesiensis (strain DSM 12029 / CIP 104789 / BI429).